A 408-amino-acid polypeptide reads, in one-letter code: Dicamba O-demethylase 1, ferredoxin reductase component (408 aa).

FAD contacts are provided by G14, K49, V82, R130, D279, and V298.

The protein belongs to the FAD-dependent oxidoreductase family. Monomer. The dicamba O-demethylase multicomponent enzyme system is composed of an oxygenase component (DdmC) and an electron transfer component formed by a ferredoxin reductase (DdmA1) and a ferredoxin (DdmB). In vitro, dicamba O-demethylase assays in which DdmA2 is substituted for DdmA1 demonstrate that the two enzymes possess nearly identical activities. Requires FAD as cofactor.

The catalysed reaction is 2 reduced [2Fe-2S]-[ferredoxin] + NAD(+) + H(+) = 2 oxidized [2Fe-2S]-[ferredoxin] + NADH. Its function is as follows. Component of the dicamba O-demethylase multicomponent enzyme system involved in the degradation of the herbicide dicamba. In vitro, catalyzes the transfers of electrons from ferredoxin (DdmB) to NADH. Both NADH and NADPH support enzyme activity, with NADH being markedly more effective than NADPH. The sequence is that of Dicamba O-demethylase 1, ferredoxin reductase component from Stenotrophomonas maltophilia (Pseudomonas maltophilia).